A 34-amino-acid chain; its full sequence is Photosystem I reaction center subunit XII (34 aa).

A helical transmembrane segment spans residues Leu-9–Ile-29.

This sequence belongs to the PsaM family.

The protein localises to the cellular thylakoid membrane. This is Photosystem I reaction center subunit XII from Prochlorococcus marinus subsp. pastoris (strain CCMP1986 / NIES-2087 / MED4).